We begin with the raw amino-acid sequence, 637 residues long: Probable polypeptide N-acetylgalactosaminyltransferase 8 (637 aa).

Topologically, residues 1 to 6 (MMFWRK) are cytoplasmic. A helical; Signal-anchor for type II membrane protein membrane pass occupies residues 7–29 (LPKALFIGLTLAIAVNLLLVFSS). The Lumenal portion of the chain corresponds to 30-637 (KGTLQNLFTG…VRDWGQTNSQ (608 aa)). N-linked (GlcNAc...) asparagine glycans are attached at residues Asn85, Asn107, and Asn160. 5 cysteine pairs are disulfide-bonded: Cys171–Cys404, Cys395–Cys474, Cys509–Cys525, Cys556–Cys571, and Cys599–Cys617. Residues 180 to 294 (LPSLSVILIF…VGWAEPILAR (115 aa)) are catalytic subdomain A. Positions 221 and 255 each coordinate substrate. Mn(2+)-binding residues include Asp278, His280, and His409. The segment at 351–412 (PVKSPSIMGI…PCSRIAHLER (62 aa)) is catalytic subdomain B. The substrate site is built by Arg412 and Tyr417. One can recognise a Ricin B-type lectin domain in the interval 496–634 (GYGRMKNLLD…QHTVRDWGQT (139 aa)).

Belongs to the glycosyltransferase 2 family. GalNAc-T subfamily. The cofactor is Mn(2+). Widely expressed. Expressed in heart, skeletal muscle, kidney, liver, small intestine and placenta. Weakly expressed in colon, thymus, spleen, lung and leukocyte.

The protein resides in the golgi apparatus membrane. It catalyses the reaction L-seryl-[protein] + UDP-N-acetyl-alpha-D-galactosamine = a 3-O-[N-acetyl-alpha-D-galactosaminyl]-L-seryl-[protein] + UDP + H(+). It carries out the reaction L-threonyl-[protein] + UDP-N-acetyl-alpha-D-galactosamine = a 3-O-[N-acetyl-alpha-D-galactosaminyl]-L-threonyl-[protein] + UDP + H(+). It functions in the pathway protein modification; protein glycosylation. Functionally, probably catalyzes the initial reaction in O-linked oligosaccharide biosynthesis, the transfer of an N-acetyl-D-galactosamine residue to a serine or threonine residue on the protein receptor. The chain is Probable polypeptide N-acetylgalactosaminyltransferase 8 (GALNT8) from Homo sapiens (Human).